The sequence spans 2153 residues: Genome polyprotein (2153 aa).

Gly2 is lipidated: N-myristoyl glycine; by host. Residues Gly2–Thr1466 are Cytoplasmic-facing. Residues Pro565 to Val582 are amphipathic alpha-helix. Active-site for protease 2A activity residues include His871 and Asp888. Residues Cys905 and Cys907 each coordinate Zn(2+). Cys959 acts as the For protease 2A activity in catalysis. Cys965 and His967 together coordinate Zn(2+). Residues Ser1091–Gln1160 form a membrane-binding region. The interval Ser1091–Thr1224 is oligomerization. Residues Gly1112–Ser1116 are RNA-binding. Residues Lys1186–Val1346 form the SF3 helicase domain. 3 residues coordinate Zn(2+): Cys1353, Cys1364, and Cys1369. Residues Cys1353–Cys1369 form a C4-type; degenerate zinc finger. The tract at residues Glu1396–Val1403 is RNA-binding. Residues Met1407–Gln1412 form an oligomerization region. An intramembrane segment occupies Ile1467–Tyr1482. Over Lys1483 to Phe2153 the chain is Cytoplasmic. Tyr1492 is subject to O-(5'-phospho-RNA)-tyrosine. In terms of domain architecture, Peptidase C3 spans Gly1511 to Phe1689. Active-site for protease 3C activity residues include His1550, Glu1581, and Cys1657. A RdRp catalytic domain is found at Asp1921 to Ala2034. Residues Asp1927 and Asp2020 each contribute to the Mg(2+) site.

Belongs to the picornaviruses polyprotein family. Interacts with capsid protein VP1 and capsid protein VP3 to form heterotrimeric protomers. In terms of assembly, interacts with capsid protein VP0, and capsid protein VP3 to form heterotrimeric protomers. Five protomers subsequently associate to form pentamers which serve as building blocks for the capsid. Interacts with capsid protein VP2, capsid protein VP3 and capsid protein VP4 following cleavage of capsid protein VP0. As to quaternary structure, interacts with capsid protein VP1 and capsid protein VP3 in the mature capsid. Interacts with capsid protein VP0 and capsid protein VP1 to form heterotrimeric protomers. Five protomers subsequently associate to form pentamers which serve as building blocks for the capsid. Interacts with capsid protein VP4 in the mature capsid. Interacts with protein 2C; this interaction may be important for virion morphogenesis. In terms of assembly, interacts with capsid protein VP1 and capsid protein VP3. As to quaternary structure, homodimer. Homohexamer; forms a hexameric ring structure with 6-fold symmetry characteristic of AAA+ ATPases. Interacts (via N-terminus) with host RTN3 (via reticulon domain); this interaction is important for viral replication. Interacts with capsid protein VP3; this interaction may be important for virion morphogenesis. In terms of assembly, interacts with protein 3CD. As to quaternary structure, homodimer. Interacts with host GBF1. Interacts (via GOLD domain) with host ACBD3 (via GOLD domain); this interaction allows the formation of a viral protein 3A/ACBD3 heterotetramer with a 2:2 stoichiometry, which will stimulate the recruitment of host PI4KB in order to synthesize PI4P at the viral RNA replication sites. Interacts with RNA-directed RNA polymerase. In terms of assembly, interacts with protein 3AB and with RNA-directed RNA polymerase. As to quaternary structure, interacts with Viral protein genome-linked and with protein 3CD. It depends on Mg(2+) as a cofactor. Post-translationally, specific enzymatic cleavages in vivo by the viral proteases yield processing intermediates and the mature proteins. Myristoylation is required for the formation of pentamers during virus assembly. Further assembly of 12 pentamers and a molecule of genomic RNA generates the provirion. In terms of processing, during virion maturation, immature virions are rendered infectious following cleavage of VP0 into VP4 and VP2. This maturation seems to be an autocatalytic event triggered by the presence of RNA in the capsid and it is followed by a conformational change infectious virion. Post-translationally, myristoylation is required during RNA encapsidation and formation of the mature virus particle. VPg is uridylylated by the polymerase into VPg-pUpU. This acts as a nucleotide-peptide primer for the genomic RNA replication.

It localises to the virion. The protein resides in the host cytoplasm. The protein localises to the host cytoplasmic vesicle membrane. It is found in the host nucleus. It carries out the reaction a ribonucleoside 5'-triphosphate + H2O = a ribonucleoside 5'-diphosphate + phosphate + H(+). The catalysed reaction is Selective cleavage of Tyr-|-Gly bond in the picornavirus polyprotein.. It catalyses the reaction RNA(n) + a ribonucleoside 5'-triphosphate = RNA(n+1) + diphosphate. The enzyme catalyses Selective cleavage of Gln-|-Gly bond in the poliovirus polyprotein. In other picornavirus reactions Glu may be substituted for Gln, and Ser or Thr for Gly.. Replication or transcription is subject to high level of random mutations by the nucleotide analog ribavirin. Forms an icosahedral capsid of pseudo T=3 symmetry with capsid proteins VP2 and VP3. The capsid is 300 Angstroms in diameter, composed of 60 copies of each capsid protein and enclosing the viral positive strand RNA genome. Capsid protein VP1 mainly forms the vertices of the capsid. Capsid protein VP1 interacts with host cell receptor to provide virion attachment to target host cells. This attachment induces virion internalization. Tyrosine kinases are probably involved in the entry process. After binding to its receptor, the capsid undergoes conformational changes. Capsid protein VP1 N-terminus (that contains an amphipathic alpha-helix) and capsid protein VP4 are externalized. Together, they shape a pore in the host membrane through which viral genome is translocated to host cell cytoplasm. In terms of biological role, forms an icosahedral capsid of pseudo T=3 symmetry with capsid proteins VP2 and VP3. The capsid is 300 Angstroms in diameter, composed of 60 copies of each capsid protein and enclosing the viral positive strand RNA genome. Its function is as follows. Lies on the inner surface of the capsid shell. After binding to the host receptor, the capsid undergoes conformational changes. Capsid protein VP4 is released, Capsid protein VP1 N-terminus is externalized, and together, they shape a pore in the host membrane through which the viral genome is translocated into the host cell cytoplasm. Functionally, component of immature procapsids, which is cleaved into capsid proteins VP4 and VP2 after maturation. Allows the capsid to remain inactive before the maturation step. Cysteine protease that cleaves viral polyprotein and specific host proteins. It is responsible for the autocatalytic cleavage between the P1 and P2 regions, which is the first cleavage occurring in the polyprotein. Also cleaves the host translation initiation factor EIF4G1, in order to shut down the capped cellular mRNA translation. Inhibits the host nucleus-cytoplasm protein and RNA trafficking by cleaving host members of the nuclear pores. Counteracts stress granule formation probably by antagonizing its assembly or promoting its dissassembly. In terms of biological role, plays an essential role in the virus replication cycle by acting as a viroporin. Creates a pore in the host endoplasmic reticulum and as a consequence releases Ca2+ in the cytoplasm of infected cell. In turn, high levels of cytoplasmic calcium may trigger membrane trafficking and transport of viral ER-associated proteins to viroplasms, sites of viral genome replication. Its function is as follows. Induces and associates with structural rearrangements of intracellular membranes. Displays RNA-binding, nucleotide binding and NTPase activities. May play a role in virion morphogenesis and viral RNA encapsidation by interacting with the capsid protein VP3. Functionally, localizes the viral replication complex to the surface of membranous vesicles. It inhibits host cell endoplasmic reticulum-to-Golgi apparatus transport and causes the disassembly of the Golgi complex, possibly through GBF1 interaction. This would result in depletion of MHC, trail receptors and IFN receptors at the host cell surface. Plays an essential role in viral RNA replication by recruiting ACBD3 and PI4KB at the viral replication sites, thereby allowing the formation of the rearranged membranous structures where viral replication takes place. Acts as a primer for viral RNA replication and remains covalently bound to viral genomic RNA. VPg is uridylylated prior to priming replication into VPg-pUpU. The oriI viral genomic sequence may act as a template for this. The VPg-pUpU is then used as primer on the genomic RNA poly(A) by the RNA-dependent RNA polymerase to replicate the viral genome. During genome replication, the VPg-RNA linkage is removed by the host TDP2, thereby accelerating replication. During the late stage of the replication cycle, host TDP2 is excluded from sites of viral RNA synthesis and encapsidation, allowing for the generation of progeny virions. In terms of biological role, involved in the viral replication complex and viral polypeptide maturation. It exhibits protease activity with a specificity and catalytic efficiency that is different from protease 3C. Protein 3CD lacks polymerase activity. Protein 3CD binds to the 5'UTR of the viral genome. Its function is as follows. Major viral protease that mediates proteolytic processing of the polyprotein. Cleaves host EIF5B, contributing to host translation shutoff. Also cleaves host PABPC1, contributing to host translation shutoff. Cleaves host NLRP1, triggers host N-glycine-mediated degradation of the autoinhibitory NLRP1 N-terminal fragment. Functionally, replicates the viral genomic RNA on the surface of intracellular membranes. May form linear arrays of subunits that propagate along a strong head-to-tail interaction called interface-I. Covalently attaches UMP to a tyrosine of VPg, which is used to prime RNA synthesis. The positive stranded RNA genome is first replicated at virus induced membranous vesicles, creating a dsRNA genomic replication form. This dsRNA is then used as template to synthesize positive stranded RNA genomes. ss(+)RNA genomes are either translated, replicated or encapsidated. The protein is Genome polyprotein of Human rhinovirus 16 (HRV-16).